The sequence spans 54 residues: Phorbol-12-myristate-13-acetate-induced protein 1 (54 aa).

The BH3 motif lies at 29–37; it reads LRRFGDKLN. The segment at 41–50 is required for mitochondrial location; that stretch reads KLLNLISKLF.

The protein belongs to the PMAIP1 family. In terms of assembly, interacts with MCL1. Interacts with BCL2A1. Interacts with BAX. Interacts with BCL2L10. As to expression, highly expressed in adult T-cell leukemia cell line.

It localises to the mitochondrion. Functionally, promotes activation of caspases and apoptosis. Promotes mitochondrial membrane changes and efflux of apoptogenic proteins from the mitochondria. Contributes to p53/TP53-dependent apoptosis after radiation exposure. Promotes proteasomal degradation of MCL1. Competes with BAK1 for binding to MCL1 and can displace BAK1 from its binding site on MCL1. Competes with BIM/BCL2L11 for binding to MCL1 and can displace BIM/BCL2L11 from its binding site on MCL1. The chain is Phorbol-12-myristate-13-acetate-induced protein 1 (PMAIP1) from Homo sapiens (Human).